We begin with the raw amino-acid sequence, 461 residues long: Cysteine--tRNA ligase (461 aa).

Position 30 (Cys30) interacts with Zn(2+). A 'HIGH' region motif is present at residues 32–42; that stretch reads VTIYDLCHIGH. Positions 211, 236, and 240 each coordinate Zn(2+). Residues 268 to 272 carry the 'KMSKS' region motif; the sequence is KMSKS. Lys271 provides a ligand contact to ATP.

The protein belongs to the class-I aminoacyl-tRNA synthetase family. As to quaternary structure, monomer. Zn(2+) is required as a cofactor.

The protein resides in the cytoplasm. The catalysed reaction is tRNA(Cys) + L-cysteine + ATP = L-cysteinyl-tRNA(Cys) + AMP + diphosphate. The chain is Cysteine--tRNA ligase from Shewanella putrefaciens (strain CN-32 / ATCC BAA-453).